We begin with the raw amino-acid sequence, 255 residues long: 4-diphosphocytidyl-2-C-methyl-D-erythritol kinase (255 aa).

The active site involves Lys-9. 95–105 (PSQAGLGGGSS) lines the ATP pocket. Asp-137 is a catalytic residue.

The protein belongs to the GHMP kinase family. IspE subfamily.

It catalyses the reaction 4-CDP-2-C-methyl-D-erythritol + ATP = 4-CDP-2-C-methyl-D-erythritol 2-phosphate + ADP + H(+). It functions in the pathway isoprenoid biosynthesis; isopentenyl diphosphate biosynthesis via DXP pathway; isopentenyl diphosphate from 1-deoxy-D-xylulose 5-phosphate: step 3/6. Functionally, catalyzes the phosphorylation of the position 2 hydroxy group of 4-diphosphocytidyl-2C-methyl-D-erythritol. This is 4-diphosphocytidyl-2-C-methyl-D-erythritol kinase from Sulfurovum sp. (strain NBC37-1).